The primary structure comprises 376 residues: 1-acyl-sn-glycerol-3-phosphate acyltransferase gamma (376 aa).

Topologically, residues 1 to 124 are cytoplasmic; the sequence is MGLLAYLKTQ…LGSSKVLAKR (124 aa). An HXXXXD motif motif is present at residues 96–101; the sequence is HNFEID. Residues 125 to 145 traverse the membrane as a helical segment; the sequence is ELLCVPLIGWTWYFLEIVFCK. Topologically, residues 146–316 are lumenal; it reads RKWEEDRDTV…TLLNFLCWAT (171 aa). The helical transmembrane segment at 317–339 threads the bilayer; sequence ILLSPLFSFVLGVFASGSPLLIL. Residues 340-376 lie on the Cytoplasmic side of the membrane; that stretch reads TFLGFVGAASFGVRRLIGVTEIEKGSSYGNQELKKKE.

This sequence belongs to the 1-acyl-sn-glycerol-3-phosphate acyltransferase family. As to expression, widely expressed. Mainly expressed in testis, kidney and liver (at protein level).

The protein localises to the endoplasmic reticulum membrane. It is found in the nucleus envelope. The catalysed reaction is a 1-acyl-sn-glycero-3-phosphate + an acyl-CoA = a 1,2-diacyl-sn-glycero-3-phosphate + CoA. It catalyses the reaction pentadecanoyl-CoA + 1-(9Z-octadecenoyl)-sn-glycero-3-phosphate = 1-(9Z)-octadecenoyl-2-pentadecanoyl-sn-glycero-3-phosphate + CoA. The enzyme catalyses heptadecanoyl-CoA + 1-(9Z-octadecenoyl)-sn-glycero-3-phosphate = 1-(9Z)-octadecenoyl-2-heptadecanoyl-sn-glycero-3-phosphate + CoA. It carries out the reaction 1-(9Z-octadecenoyl)-sn-glycero-3-phosphate + octadecanoyl-CoA = 1-(9Z-octadecenoyl)-2-octadecanoyl-sn-glycero-3-phosphate + CoA. The catalysed reaction is nonadecanoyl-CoA + 1-(9Z-octadecenoyl)-sn-glycero-3-phosphate = 1-(9Z)-octadecenoyl-2-nonadecanoyl-sn-glycero-3-phosphate + CoA. It catalyses the reaction 1-(9Z-octadecenoyl)-sn-glycero-3-phosphate + (5Z,8Z,11Z,14Z)-eicosatetraenoyl-CoA = 1-(9Z)-octadecenoyl-2-(5Z,8Z,11Z,14Z)-eicosatetraenoyl-sn-glycero-3-phosphate + CoA. The enzyme catalyses 1-(9Z-octadecenoyl)-sn-glycero-3-phosphate + (9Z)-octadecenoyl-CoA = 1,2-di-(9Z-octadecenoyl)-sn-glycero-3-phosphate + CoA. It carries out the reaction 1-(9Z-octadecenoyl)-sn-glycero-3-phosphate + (9Z,12Z)-octadecadienoyl-CoA = 1-(9Z)-octadecenoyl-2-(9Z,12Z)-octadecadienoyl-sn-glycero-3-phosphate + CoA. The catalysed reaction is 1-(9Z-octadecenoyl)-sn-glycero-3-phosphocholine + (5Z,8Z,11Z,14Z)-eicosatetraenoyl-CoA = 1-(9Z)-octadecenoyl-2-(5Z,8Z,11Z,14Z)-icosatetraenoyl-sn-glycero-3-phosphocholine + CoA. It catalyses the reaction 1-(9Z-octadecenoyl)-sn-glycero-3-phospho-(1D-myo-inositol) + (5Z,8Z,11Z,14Z)-eicosatetraenoyl-CoA = 1-(9Z-octadecenoyl)-2-(5Z,8Z,11Z,14Z-eicosatetraenoyl)-sn-glycero-3-phospho-1D-myo-inositol + CoA. The enzyme catalyses 1-(9Z-octadecenoyl)-sn-glycero-3-phospho-L-serine + (5Z,8Z,11Z,14Z)-eicosatetraenoyl-CoA = 1-(9Z-octadecenoyl)-2-(5Z,8Z,11Z,14Z-eicosatetraenoyl)-sn-glycero-3-phospho-L-serine + CoA. It carries out the reaction 1-hexadecanoyl-sn-glycero-3-phosphate + (9Z)-octadecenoyl-CoA = 1-hexadecanoyl-2-(9Z-octadecenoyl)-sn-glycero-3-phosphate + CoA. The catalysed reaction is 1-hexadecanoyl-sn-glycero-3-phosphate + (5Z,8Z,11Z,14Z)-eicosatetraenoyl-CoA = 1-hexadecanoyl-2-(5Z,8Z,11Z,14Z-eicosatetraenoyl)-sn-glycero-3-phosphate + CoA. It catalyses the reaction 1-heptadecanoyl-sn-glycero-3-phosphate + (5Z,8Z,11Z,14Z)-eicosatetraenoyl-CoA = 1-heptadecanoyl-2-(5Z,8Z,11Z,14Z)-eicosatetraenoyl-sn-glycero-3-phosphate + CoA. The enzyme catalyses 1-octadecanoyl-sn-glycero-3-phosphate + (9Z)-octadecenoyl-CoA = 1-octadecanoyl-2-(9Z-octadecenoyl)-sn-glycero-3-phosphate + CoA. It carries out the reaction 1-octadecanoyl-sn-glycero-3-phosphate + (5Z,8Z,11Z,14Z)-eicosatetraenoyl-CoA = 1-octadecanoyl-2-(5Z,8Z,11Z,14Z-eicosatetraenoyl)-sn-glycero-3-phosphate + CoA. The catalysed reaction is 1-(9Z-octadecenoyl)-sn-glycero-3-phosphate + hexadecanoyl-CoA = 1-hexadecanoyl-2-(9Z-octadecenoyl)-sn-glycero-3-phosphate + CoA. It catalyses the reaction 1-O-(9Z-octadecenyl)-sn-glycero-3-phosphate + (5Z,8Z,11Z,14Z)-eicosatetraenoyl-CoA = 1-O-(9Z-octadecenyl)-2-(5Z,8Z,11Z,14Z-eicosatetraenoyl)-sn-glycero-3-phosphate + CoA. The enzyme catalyses a 1-acyl-sn-glycero-3-phospho-(1D-myo-inositol) + (5Z,8Z,11Z,14Z)-eicosatetraenoyl-CoA = a 1-acyl-2-(5Z,8Z,11Z,14Z-eicosatetraenoyl)-sn-glycero-3-phospho-(1D-myo-inositol) + CoA. The protein operates within phospholipid metabolism; CDP-diacylglycerol biosynthesis; CDP-diacylglycerol from sn-glycerol 3-phosphate: step 2/3. Its activity is regulated as follows. In males, activity increases in an age-dependent fashion, maybe derived from the induction by sex-hormones. Converts 1-acyl-sn-glycerol-3-phosphate (lysophosphatidic acid or LPA) into 1,2-diacyl-sn-glycerol-3-phosphate (phosphatidic acid or PA) by incorporating an acyl moiety at the sn-2 position of the glycerol backbone. Acts on LPA containing saturated or unsaturated fatty acids C16:0-C20:4 at the sn-1 position using C18:1, C20:4 or C18:2-CoA as the acyl donor. Also acts on lysophosphatidylcholine, lysophosphatidylinositol and lysophosphatidylserine using C18:1 or C20:4-CoA. Has a preference for arachidonoyl-CoA as a donor. Also has a modest lysophosphatidylinositol acyltransferase (LPIAT) activity, converts lysophosphatidylinositol (LPI) into phosphatidylinositol. In Mus musculus (Mouse), this protein is 1-acyl-sn-glycerol-3-phosphate acyltransferase gamma.